The primary structure comprises 178 residues: ATP synthase subunit delta (178 aa).

Belongs to the ATPase delta chain family. In terms of assembly, F-type ATPases have 2 components, F(1) - the catalytic core - and F(0) - the membrane proton channel. F(1) has five subunits: alpha(3), beta(3), gamma(1), delta(1), epsilon(1). F(0) has three main subunits: a(1), b(2) and c(10-14). The alpha and beta chains form an alternating ring which encloses part of the gamma chain. F(1) is attached to F(0) by a central stalk formed by the gamma and epsilon chains, while a peripheral stalk is formed by the delta and b chains.

It is found in the cell inner membrane. Its function is as follows. F(1)F(0) ATP synthase produces ATP from ADP in the presence of a proton or sodium gradient. F-type ATPases consist of two structural domains, F(1) containing the extramembraneous catalytic core and F(0) containing the membrane proton channel, linked together by a central stalk and a peripheral stalk. During catalysis, ATP synthesis in the catalytic domain of F(1) is coupled via a rotary mechanism of the central stalk subunits to proton translocation. In terms of biological role, this protein is part of the stalk that links CF(0) to CF(1). It either transmits conformational changes from CF(0) to CF(1) or is implicated in proton conduction. The polypeptide is ATP synthase subunit delta (Pseudomonas aeruginosa (strain UCBPP-PA14)).